The primary structure comprises 59 residues: Large ribosomal subunit protein bL32 (59 aa).

Over residues 1–16 (MAVPKRKTSPSKRGMR) the composition is skewed to basic residues. A disordered region spans residues 1-59 (MAVPKRKTSPSKRGMRRSADALKAPTYIEDKNSGELRRPHHIDLKTGMYRGRSVLPPKD). Residues 28-44 (IEDKNSGELRRPHHIDL) are compositionally biased toward basic and acidic residues.

Belongs to the bacterial ribosomal protein bL32 family.

The sequence is that of Large ribosomal subunit protein bL32 from Bartonella quintana (strain Toulouse) (Rochalimaea quintana).